A 96-amino-acid chain; its full sequence is uncharacterized protein (96 aa).

3 residues coordinate [3Fe-4S] cluster: Cys10, Cys16, and Cys55. The interval 67-96 (AGDGERASADPAPSPAEAERHAAKDQHNLG) is disordered. The segment covering 83 to 96 (EAERHAAKDQHNLG) has biased composition (basic and acidic residues).

[3Fe-4S] cluster is required as a cofactor.

Electron transport protein for the cytochrome systems. This is an uncharacterized protein from Bradyrhizobium diazoefficiens (strain JCM 10833 / BCRC 13528 / IAM 13628 / NBRC 14792 / USDA 110).